Consider the following 58-residue polypeptide: MAVPKKKTSNAKRDQRKAHWKRTAALEAQKALSLGKSVLSGRSNSFVYPQDEEEDDEE.

2 disordered regions span residues 1–22 (MAVP…HWKR) and 39–58 (LSGR…DDEE).

Belongs to the bacterial ribosomal protein bL32 family.

This chain is Large ribosomal subunit protein bL32, found in Crocosphaera subtropica (strain ATCC 51142 / BH68) (Cyanothece sp. (strain ATCC 51142)).